We begin with the raw amino-acid sequence, 336 residues long: Large ribosomal subunit protein uL10 (336 aa).

Residues alanine 305–phenylalanine 336 are disordered. The span at glutamate 311–alanine 326 shows a compositional bias: basic and acidic residues.

It belongs to the universal ribosomal protein uL10 family. Part of the 50S ribosomal subunit. Forms part of the ribosomal stalk which helps the ribosome interact with GTP-bound translation factors. Forms a heptameric L10(L12)2(L12)2(L12)2 complex, where L10 forms an elongated spine to which the L12 dimers bind in a sequential fashion.

In terms of biological role, forms part of the ribosomal stalk, playing a central role in the interaction of the ribosome with GTP-bound translation factors. The protein is Large ribosomal subunit protein uL10 of Methanococcus vannielii (strain ATCC 35089 / DSM 1224 / JCM 13029 / OCM 148 / SB).